The chain runs to 295 residues: ATP synthase gamma chain (295 aa).

It belongs to the ATPase gamma chain family. As to quaternary structure, F-type ATPases have 2 components, CF(1) - the catalytic core - and CF(0) - the membrane proton channel. CF(1) has five subunits: alpha(3), beta(3), gamma(1), delta(1), epsilon(1). CF(0) has three main subunits: a, b and c.

The protein resides in the cell inner membrane. Its function is as follows. Produces ATP from ADP in the presence of a proton gradient across the membrane. The gamma chain is believed to be important in regulating ATPase activity and the flow of protons through the CF(0) complex. The polypeptide is ATP synthase gamma chain (Methylorubrum populi (strain ATCC BAA-705 / NCIMB 13946 / BJ001) (Methylobacterium populi)).